Reading from the N-terminus, the 419-residue chain is 3-isopropylmalate dehydratase large subunit (419 aa).

Residues C300, C360, and C363 each coordinate [4Fe-4S] cluster.

This sequence belongs to the aconitase/IPM isomerase family. LeuC type 2 subfamily. Heterodimer of LeuC and LeuD. Requires [4Fe-4S] cluster as cofactor.

It carries out the reaction (2R,3S)-3-isopropylmalate = (2S)-2-isopropylmalate. It functions in the pathway amino-acid biosynthesis; L-leucine biosynthesis; L-leucine from 3-methyl-2-oxobutanoate: step 2/4. Functionally, catalyzes the isomerization between 2-isopropylmalate and 3-isopropylmalate, via the formation of 2-isopropylmaleate. The sequence is that of 3-isopropylmalate dehydratase large subunit from Acetivibrio thermocellus (strain ATCC 27405 / DSM 1237 / JCM 9322 / NBRC 103400 / NCIMB 10682 / NRRL B-4536 / VPI 7372) (Clostridium thermocellum).